The sequence spans 604 residues: Elongation factor 4 (604 aa).

The tr-type G domain maps to Lys-10–Ser-191. Residues Asp-22 to Thr-27 and Asn-138 to Asp-141 contribute to the GTP site.

The protein belongs to the TRAFAC class translation factor GTPase superfamily. Classic translation factor GTPase family. LepA subfamily.

It localises to the cell inner membrane. It carries out the reaction GTP + H2O = GDP + phosphate + H(+). In terms of biological role, required for accurate and efficient protein synthesis under certain stress conditions. May act as a fidelity factor of the translation reaction, by catalyzing a one-codon backward translocation of tRNAs on improperly translocated ribosomes. Back-translocation proceeds from a post-translocation (POST) complex to a pre-translocation (PRE) complex, thus giving elongation factor G a second chance to translocate the tRNAs correctly. Binds to ribosomes in a GTP-dependent manner. The protein is Elongation factor 4 of Helicobacter pylori (strain P12).